Here is a 487-residue protein sequence, read N- to C-terminus: Protein nucleotidyltransferase YdiU (487 aa).

ATP is bound by residues G90, G92, R93, K113, D125, G126, R176, and R183. Catalysis depends on D252, which acts as the Proton acceptor. Mg(2+) is bound by residues N253 and D262. Residue D262 participates in ATP binding.

This sequence belongs to the SELO family. It depends on Mg(2+) as a cofactor. The cofactor is Mn(2+).

It catalyses the reaction L-seryl-[protein] + ATP = 3-O-(5'-adenylyl)-L-seryl-[protein] + diphosphate. The enzyme catalyses L-threonyl-[protein] + ATP = 3-O-(5'-adenylyl)-L-threonyl-[protein] + diphosphate. The catalysed reaction is L-tyrosyl-[protein] + ATP = O-(5'-adenylyl)-L-tyrosyl-[protein] + diphosphate. It carries out the reaction L-histidyl-[protein] + UTP = N(tele)-(5'-uridylyl)-L-histidyl-[protein] + diphosphate. It catalyses the reaction L-seryl-[protein] + UTP = O-(5'-uridylyl)-L-seryl-[protein] + diphosphate. The enzyme catalyses L-tyrosyl-[protein] + UTP = O-(5'-uridylyl)-L-tyrosyl-[protein] + diphosphate. Nucleotidyltransferase involved in the post-translational modification of proteins. It can catalyze the addition of adenosine monophosphate (AMP) or uridine monophosphate (UMP) to a protein, resulting in modifications known as AMPylation and UMPylation. The protein is Protein nucleotidyltransferase YdiU of Pseudomonas fluorescens (strain Pf0-1).